The primary structure comprises 109 residues: MSEIRLIRAINDELYLVEVQATLERKADSLHIGDLKIIKEKNSEKKKATLTVGNQYMEGVVESLKKPLAVLQKTNADPVDVYSSPSHELKCCSIIRERIRFSSRPLPTK.

This sequence belongs to the CTF8 family. As to quaternary structure, component of the ctf18-RFC complex which consists of ctf18, ctf8, dcc1, rfc2, rfc3, rfc4 and rfc5.

The protein localises to the nucleus. Essential for the fidelity of chromosome transmission. Required for the DNA replication block checkpoint. Replication factor C (RFC) complex has an essential but redundant activity in sister chromatid cohesion establishment. An RFC-like complex (ctf18-RFC) is formed where ctf18 replaces rfc1 in the RFC complex along with the association of dcc1 and ctf8. This complex is required for efficient establishment of chromosome cohesion during S-phase. Acts as a PCNA loader, loading PCNA onto primed templates. The sequence is that of Chromosome transmission fidelity protein 8 (ctf8) from Schizosaccharomyces pombe (strain 972 / ATCC 24843) (Fission yeast).